Consider the following 613-residue polypeptide: MPKYRSSTTTQGRNMAGARALWKATGMTDSDFNKPIIAVVNSFTEFVPGHIHLKELGTLVSSIIKLEGGVAKEFNTIAIDDGIAMGHSGMLYSLPSRELIADSIEYMINAHCADAMICISNCDKITPGMLMAALRLNIPCVFVSGGPMESGRIVVDGKEIKINLVDAIVYGANPNYSDALASRIENCACPTCGSCSGLFTANSMNCLTEALGLSLPGNGTLLATHIDRKKLFIDSGKLIVKITKEYYEDNNTSFLPRSIASRESFLNAMSLDISTGGSTNTILHLLAMAQEGQVDFKMSDIDLLSRKIPNLCKIAPNSDVYHMEDFHRAGGVIGLLAELNRVSLLNNNVKNILGLSLDVVLNKYDILKTKNQDVIEMFHAGPLGNKTSIPFTQSYRWKSLDKDRKKGCIRSYENAFSYDGGLAILYGNIAKNGCVVKTAGVKKGNLIFEGFAIVFESQEEALKAILENKVKKGHVVVIRYEGPKGGPGMQEMLYPTTYLKSMNLDEHCALITDGRFSGGTSGLSIGHISPEAANKGNIALIRNNDVININIPNRTINLDITNDEFLNRMHNEIQRGKSSYTPQFRKRFVSSALKMYALFATSADKGAVRKIQY.

Aspartate 81 is a binding site for Mg(2+). A [2Fe-2S] cluster-binding site is contributed by cysteine 122. Aspartate 123 and lysine 124 together coordinate Mg(2+). Position 124 is an N6-carboxylysine (lysine 124). Position 195 (cysteine 195) interacts with [2Fe-2S] cluster. Residue glutamate 491 coordinates Mg(2+). Catalysis depends on serine 517, which acts as the Proton acceptor.

It belongs to the IlvD/Edd family. Homodimer. It depends on [2Fe-2S] cluster as a cofactor. Mg(2+) serves as cofactor.

It catalyses the reaction (2R)-2,3-dihydroxy-3-methylbutanoate = 3-methyl-2-oxobutanoate + H2O. The catalysed reaction is (2R,3R)-2,3-dihydroxy-3-methylpentanoate = (S)-3-methyl-2-oxopentanoate + H2O. The protein operates within amino-acid biosynthesis; L-isoleucine biosynthesis; L-isoleucine from 2-oxobutanoate: step 3/4. Its pathway is amino-acid biosynthesis; L-valine biosynthesis; L-valine from pyruvate: step 3/4. Its function is as follows. Functions in the biosynthesis of branched-chain amino acids. Catalyzes the dehydration of (2R,3R)-2,3-dihydroxy-3-methylpentanoate (2,3-dihydroxy-3-methylvalerate) into 2-oxo-3-methylpentanoate (2-oxo-3-methylvalerate) and of (2R)-2,3-dihydroxy-3-methylbutanoate (2,3-dihydroxyisovalerate) into 2-oxo-3-methylbutanoate (2-oxoisovalerate), the penultimate precursor to L-isoleucine and L-valine, respectively. The sequence is that of Dihydroxy-acid dehydratase from Buchnera aphidicola subsp. Schlechtendalia chinensis.